The sequence spans 2113 residues: Unconventional myosin-VIIb (2113 aa).

The 696-residue stretch at 65–760 (QGVDDMIRLG…QDTVLEIRRS (696 aa)) folds into the Myosin motor domain. 158 to 165 (GESGAGKT) serves as a coordination point for ATP. The tract at residues 637 to 659 (LDQLMRILTNCQPYFVRCIKPNE) is actin-binding. IQ domains lie at 745–765 (IFLKDHQDTVLEIRRSQALDG), 763–792 (LDGAAIRIQRVLRGHKYRKEFLRQRRAAVT), 786–815 (QRRAAVTLQAGWRGYSQRKNFKLILVGFER), 809–838 (ILVGFERLQAIARSHLLMRQFQAMRQRIVQ), 832–861 (MRQRIVQLQARCRGYLVRQQVQAKRRAVVI), and 855–884 (KRRAVVIIQAHARGMVVRKSYWQQKSTGPQ). Ser-904 carries the phosphoserine modification. The segment at 962–1578 (EEEVDSLAEY…STQLLSLLAM (617 aa)) is mediates interaction with ANKS4B. The region spanning 989–1189 (HIQKPLRYPL…PTWLELQAVK (201 aa)) is the MyTH4 1 domain. One can recognise an FERM 1 domain in the interval 1194–1503 (IPIQVILATG…GGLKERSVFA (310 aa)). Thr-1339 bears the Phosphothreonine mark. Ser-1368 is subject to Phosphoserine. A mediates interaction with CDHR2, CDHR5 and USH1C region spans residues 1497-2113 (KERSVFAMAL…GFRAPAPANP (617 aa)). Positions 1498–1564 (ERSVFAMALQ…PTACLYTIPS (67 aa)) constitute an SH3 domain. MyTH4 domains lie at 1641-1790 (YSPE…KAAE) and 1790-1896 (EQNV…LNVT). At Ser-1642 the chain carries Phosphoserine. The FERM 2 domain occupies 1796-2099 (LHHEVYLPND…SYVQQLLNTV (304 aa)).

The protein belongs to the TRAFAC class myosin-kinesin ATPase superfamily. Myosin family. Part of the IMAC/intermicrovillar adhesion complex/intermicrovillar tip-link complex composed of ANKS4B, MYO7B, USH1C, CDHR2 and CDHR5. Interacts with CDHR2. Interacts with CDHR5. Interacts with USH1C. Interacts with ANKS4B; requires initial interaction with USH1C. Interacts with CALML4; the interaction mediates the association of CALML4 with the IMAC/intermicrovillar adhesion complex. As to expression, expressed primarily in kidney and intestine. Detected in proximal tubule cells of the kidney and enterocytes of the intestine, specifically the distal tips of apical microvilli on these transporting epithelial cells (at protein level).

It localises to the cytoplasm. The protein localises to the cytoskeleton. Its subcellular location is the cell projection. It is found in the microvillus. Its function is as follows. Myosins are actin-based motor molecules with ATPase activity. Their highly divergent tails are presumed to bind to membranous compartments, which would be moved relative to actin filaments. As part of the intermicrovillar adhesion complex/IMAC plays a role in epithelial brush border differentiation, controlling microvilli organization and length. May link the complex to the actin core bundle of microvilli. The polypeptide is Unconventional myosin-VIIb (Myo7b) (Mus musculus (Mouse)).